Consider the following 424-residue polypeptide: Chloroquine resistance transporter (424 aa).

Over 1 to 49 (MKFASKKNNQKNSSKNDERYRELDNLVQEGNGSRLGGGSCLGKCAHVFK) the chain is Cytoplasmic. The stretch at 50–58 (LIFKEIKDN) is an intramembrane region. The helical transmembrane segment at 59–83 (IFIYILSIIYLSVSVMNTIFAKRTL) threads the bilayer. The Vacuolar portion of the chain corresponds to 84 to 89 (NKIGNY). The chain crosses the membrane as a helical span at residues 90-111 (SFVTSETHNFICMIMFFIVYSL). At 112-126 (FGNKKGNSKERHRSF) the chain is on the cytoplasmic side. The helical transmembrane segment at 127–147 (NLQFFAISMLDACSVILAFIG) threads the bilayer. At 148–152 (LTRTT) the chain is on the vacuolar side. The chain crosses the membrane as a helical span at residues 153–173 (GNIQSFVLQLSIPINMFFCFL). Residues 174–180 (ILRYRYH) lie on the Cytoplasmic side of the membrane. The chain crosses the membrane as a helical span at residues 181–202 (LYNYLGAVIIVVTIALVEMKLS). Topologically, residues 203-210 (FETQEENS) are vacuolar. The chain crosses the membrane as a helical span at residues 211-236 (IIFNLVLISSLIPVCFSNMTREIVFK). Residues 237-241 (KYKID) are Cytoplasmic-facing. Residues 242 to 263 (ILRLNAMVSFFQLFTSCLILPV) traverse the membrane as a helical segment. The Vacuolar portion of the chain corresponds to 264-279 (YTLPFLKQLHLPYNEI). The stretch at 280–292 (WTNIKNGFACLFL) is an intramembrane region. Intrachain disulfides connect Cys289–Cys312 and Cys301–Cys309. Residues 293 to 314 (GRNTVVENCGLGMAKLCDDCDG) lie on the Vacuolar side of the membrane. Residues 315–339 (AWKTFALFSFFDICDNLITSYIIDK) traverse the membrane as a helical segment. Residues 340 to 343 (FSTM) lie on the Cytoplasmic side of the membrane. Residues 344 to 361 (TYTIVSCIQGPALAIAYY) traverse the membrane as a helical segment. Residues 362-374 (FKFLAGDVVREPR) are Vacuolar-facing. The chain crosses the membrane as a helical span at residues 375–397 (LLDFVTLFGYLFGSIIYRVGNII). Topologically, residues 398-424 (LERKKMRNEENEDSEGELTNVDSIITQ) are cytoplasmic.

This sequence belongs to the CRT-like transporter family. Monomer.

The protein resides in the membrane. It localises to the vacuole membrane. The enzyme catalyses L-arginine(in) = L-arginine(out). It carries out the reaction L-lysine(in) = L-lysine(out). The catalysed reaction is L-histidine(out) = L-histidine(in). It catalyses the reaction Fe(3+)(in) = Fe(3+)(out). The enzyme catalyses Fe(2+)(in) = Fe(2+)(out). Nutrient transporter. Substrate transport is pH-dependent. Can transport arginine, lysine, histidine and peptides. Involved in maintaining the osmotic homeostasis of the digestive vacuole. Required for the normal asexual intraerythrocytic proliferation of parasites. Can transport Fe(2+) and Fe(3+). The sequence is that of Chloroquine resistance transporter from Plasmodium falciparum (isolate 7G8).